Reading from the N-terminus, the 319-residue chain is 4-hydroxy-3-methylbut-2-enyl diphosphate reductase (319 aa).

Cys-18 serves as a coordination point for [4Fe-4S] cluster. 2 residues coordinate (2E)-4-hydroxy-3-methylbut-2-enyl diphosphate: His-47 and His-81. His-47 and His-81 together coordinate dimethylallyl diphosphate. Isopentenyl diphosphate is bound by residues His-47 and His-81. [4Fe-4S] cluster is bound at residue Cys-103. His-131 is a binding site for (2E)-4-hydroxy-3-methylbut-2-enyl diphosphate. Position 131 (His-131) interacts with dimethylallyl diphosphate. Position 131 (His-131) interacts with isopentenyl diphosphate. Glu-133 functions as the Proton donor in the catalytic mechanism. (2E)-4-hydroxy-3-methylbut-2-enyl diphosphate is bound at residue Thr-172. Cys-202 contacts [4Fe-4S] cluster. The (2E)-4-hydroxy-3-methylbut-2-enyl diphosphate site is built by Ser-230, Ser-231, Asn-232, and Ser-275. The dimethylallyl diphosphate site is built by Ser-230, Ser-231, Asn-232, and Ser-275. The isopentenyl diphosphate site is built by Ser-230, Ser-231, Asn-232, and Ser-275.

Belongs to the IspH family. It depends on [4Fe-4S] cluster as a cofactor.

The catalysed reaction is isopentenyl diphosphate + 2 oxidized [2Fe-2S]-[ferredoxin] + H2O = (2E)-4-hydroxy-3-methylbut-2-enyl diphosphate + 2 reduced [2Fe-2S]-[ferredoxin] + 2 H(+). It catalyses the reaction dimethylallyl diphosphate + 2 oxidized [2Fe-2S]-[ferredoxin] + H2O = (2E)-4-hydroxy-3-methylbut-2-enyl diphosphate + 2 reduced [2Fe-2S]-[ferredoxin] + 2 H(+). The protein operates within isoprenoid biosynthesis; dimethylallyl diphosphate biosynthesis; dimethylallyl diphosphate from (2E)-4-hydroxy-3-methylbutenyl diphosphate: step 1/1. Its pathway is isoprenoid biosynthesis; isopentenyl diphosphate biosynthesis via DXP pathway; isopentenyl diphosphate from 1-deoxy-D-xylulose 5-phosphate: step 6/6. Catalyzes the conversion of 1-hydroxy-2-methyl-2-(E)-butenyl 4-diphosphate (HMBPP) into a mixture of isopentenyl diphosphate (IPP) and dimethylallyl diphosphate (DMAPP). Acts in the terminal step of the DOXP/MEP pathway for isoprenoid precursor biosynthesis. The sequence is that of 4-hydroxy-3-methylbut-2-enyl diphosphate reductase from Methylocella silvestris (strain DSM 15510 / CIP 108128 / LMG 27833 / NCIMB 13906 / BL2).